Consider the following 150-residue polypeptide: Large ribosomal subunit protein bL9 (150 aa).

Belongs to the bacterial ribosomal protein bL9 family.

Its function is as follows. Binds to the 23S rRNA. The protein is Large ribosomal subunit protein bL9 of Cupriavidus taiwanensis (strain DSM 17343 / BCRC 17206 / CCUG 44338 / CIP 107171 / LMG 19424 / R1) (Ralstonia taiwanensis (strain LMG 19424)).